A 300-amino-acid polypeptide reads, in one-letter code: Ribosomal protein L11 methyltransferase (300 aa).

S-adenosyl-L-methionine is bound by residues Thr152, Gly173, Asp195, and Asn234.

It belongs to the methyltransferase superfamily. PrmA family.

It localises to the cytoplasm. The enzyme catalyses L-lysyl-[protein] + 3 S-adenosyl-L-methionine = N(6),N(6),N(6)-trimethyl-L-lysyl-[protein] + 3 S-adenosyl-L-homocysteine + 3 H(+). In terms of biological role, methylates ribosomal protein L11. In Paraburkholderia phytofirmans (strain DSM 17436 / LMG 22146 / PsJN) (Burkholderia phytofirmans), this protein is Ribosomal protein L11 methyltransferase.